The chain runs to 180 residues: Major urinary protein 5 (180 aa).

The N-terminal stretch at 1-18 (MKLLLLLCLELTLVYVHA) is a signal peptide. The cysteines at positions 82 and 175 are disulfide-linked.

The protein belongs to the calycin superfamily. Lipocalin family.

The protein localises to the secreted. Its function is as follows. Major urinary proteins (Mups) bind pheromones, and thus stabilize them to allow slow release into the air from urine marks. May protect pheromones from oxidation. May also act as pheromones themselves. In this context, they play a role in the regulation of social behaviors, such as aggression, mating, pup-suckling, territory establishment and dominance. This chain is Major urinary protein 5, found in Mus musculus (Mouse).